The chain runs to 82 residues: MAGGSTGERPFGDIITSIRYWVIHSITIPALFIAGWLFVSTGLAYDVFGTPRPNEYYTEQRQELPILSDRFESKQQIDDFIK.

A helical transmembrane segment spans residues 22-36 (VIHSITIPALFIAGW). Residue histidine 24 participates in heme binding.

It belongs to the PsbE/PsbF family. As to quaternary structure, heterodimer of an alpha subunit and a beta subunit. PSII is composed of 1 copy each of membrane proteins PsbA, PsbB, PsbC, PsbD, PsbE, PsbF, PsbH, PsbI, PsbJ, PsbK, PsbL, PsbM, PsbT, PsbX, PsbY, PsbZ, Psb30/Ycf12, peripheral proteins PsbO, CyanoQ (PsbQ), PsbU, PsbV and a large number of cofactors. It forms dimeric complexes. Heme b is required as a cofactor.

It localises to the cellular thylakoid membrane. In terms of biological role, this b-type cytochrome is tightly associated with the reaction center of photosystem II (PSII). PSII is a light-driven water:plastoquinone oxidoreductase that uses light energy to abstract electrons from H(2)O, generating O(2) and a proton gradient subsequently used for ATP formation. It consists of a core antenna complex that captures photons, and an electron transfer chain that converts photonic excitation into a charge separation. This Trichodesmium erythraeum (strain IMS101) protein is Cytochrome b559 subunit alpha.